We begin with the raw amino-acid sequence, 517 residues long: Serine O-succinyltransferase (517 aa).

The transit peptide at 1 to 46 (MSPLNGVARSLPRPFQAVARRPFRVAQPAVACPSNRRSFNHSRSLR) directs the protein to the mitochondrion. Residues 34-66 (SNRRSFNHSRSLRSTGSQSPAPSPRDSSNPALS) are disordered. The segment covering 45-64 (LRSTGSQSPAPSPRDSSNPA) has biased composition (polar residues). The AB hydrolase-1 domain maps to 134 to 386 (NVILLHTGLS…LTQQLATKKQ (253 aa)). The important for substrate specificity stretch occupies residues 141 to 144 (GLSA). The Nucleophile role is filled by S238. A substrate-binding site is contributed by R307. The disordered stretch occupies residues 413–436 (QPYQEQPSASTSAEQSASASETGS). Residues 416–436 (QEQPSASTSAEQSASASETGS) show a composition bias toward low complexity. Active-site residues include D461 and H498. D499 contacts substrate.

Belongs to the AB hydrolase superfamily. MetX family.

Its subcellular location is the mitochondrion. It catalyses the reaction succinyl-CoA + L-serine = O-succinyl-L-serine + CoA. The protein operates within amino-acid biosynthesis; L-cysteine biosynthesis; L-cysteine from L-serine: step 1/2. Transfers a succinyl group from succinyl-CoA to L-serine, forming succinyl-L-serine. Also has weak serine acetyl transferase activity and homoserine succinyl transferase activity. The chain is Serine O-succinyltransferase from Emericella nidulans (Aspergillus nidulans).